Here is a 105-residue protein sequence, read N- to C-terminus: L-rhamnose mutarotase (105 aa).

Tyr19 is a substrate binding site. His23 (proton donor) is an active-site residue. Substrate contacts are provided by residues Tyr42 and 77-78 (WW).

The protein belongs to the rhamnose mutarotase family. Homodimer.

Its subcellular location is the cytoplasm. The enzyme catalyses alpha-L-rhamnose = beta-L-rhamnose. Its pathway is carbohydrate metabolism; L-rhamnose metabolism. In terms of biological role, involved in the anomeric conversion of L-rhamnose. This Mesorhizobium japonicum (strain LMG 29417 / CECT 9101 / MAFF 303099) (Mesorhizobium loti (strain MAFF 303099)) protein is L-rhamnose mutarotase.